A 105-amino-acid chain; its full sequence is Histone H2A-like 1 (105 aa).

It belongs to the histone H2A family. In terms of assembly, the nucleosome is a histone octamer containing two molecules each of H2A, H2B, H3 and H4 assembled in one H3-H4 heterotetramer and two H2A-H2B heterodimers. May be incorporated into a proportion of nucleosomes, replacing one or more H2A molecules. Interacts with H2BC1/TH2B; preferentially dimerizes with H2BC1/TH2B to form nucleosomes. As to expression, testis-specific.

The protein resides in the nucleus. It localises to the chromosome. Its function is as follows. Atypical histone H2A which can replace conventional H2A in some nucleosomes and may play a role during spermatogenesis. Nucleosomes wrap and compact DNA into chromatin, limiting DNA accessibility to the cellular machineries which require DNA as a template. Histones thereby play a central role in transcription regulation, DNA repair, DNA replication and chromosomal stability. DNA accessibility is regulated via a complex set of post-translational modifications of histones, also called histone code, and nucleosome remodeling. This Mus musculus (Mouse) protein is Histone H2A-like 1.